Here is a 118-residue protein sequence, read N- to C-terminus: Large ribosomal subunit protein bL19 (118 aa).

This sequence belongs to the bacterial ribosomal protein bL19 family.

In terms of biological role, this protein is located at the 30S-50S ribosomal subunit interface and may play a role in the structure and function of the aminoacyl-tRNA binding site. In Campylobacter concisus (strain 13826), this protein is Large ribosomal subunit protein bL19.